Here is a 475-residue protein sequence, read N- to C-terminus: Adenosylhomocysteinase (475 aa).

Positions 66, 141, and 201 each coordinate substrate. 202 to 204 (TTT) is an NAD(+) binding site. Residues lysine 231 and aspartate 235 each contribute to the substrate site. NAD(+)-binding positions include asparagine 236, 265 to 270 (GYGEVG), glutamate 288, asparagine 323, 344 to 346 (IGH), and asparagine 389.

Belongs to the adenosylhomocysteinase family. The cofactor is NAD(+).

It is found in the cytoplasm. It carries out the reaction S-adenosyl-L-homocysteine + H2O = L-homocysteine + adenosine. It functions in the pathway amino-acid biosynthesis; L-homocysteine biosynthesis; L-homocysteine from S-adenosyl-L-homocysteine: step 1/1. Its function is as follows. May play a key role in the regulation of the intracellular concentration of adenosylhomocysteine. The protein is Adenosylhomocysteinase of Geobacter sulfurreducens (strain ATCC 51573 / DSM 12127 / PCA).